The primary structure comprises 259 residues: Ribosomal RNA small subunit methyltransferase J (259 aa).

Residues 101–102 (RD), 117–118 (ER), 153–154 (SS), and D176 each bind S-adenosyl-L-methionine.

The protein belongs to the methyltransferase superfamily. RsmJ family.

The protein resides in the cytoplasm. It catalyses the reaction guanosine(1516) in 16S rRNA + S-adenosyl-L-methionine = N(2)-methylguanosine(1516) in 16S rRNA + S-adenosyl-L-homocysteine + H(+). Specifically methylates the guanosine in position 1516 of 16S rRNA. The polypeptide is Ribosomal RNA small subunit methyltransferase J (Vibrio vulnificus (strain YJ016)).